The following is a 149-amino-acid chain: Transcriptional repressor NrdR (149 aa).

A zinc finger lies at 3–34 (CPFCGHLETQVVETRISEDAEFIRRRRQCGAC). Positions 49-139 (PSIVKKDGRR…VYRSFEDIDE (91 aa)) constitute an ATP-cone domain.

Belongs to the NrdR family. The cofactor is Zn(2+).

Functionally, negatively regulates transcription of bacterial ribonucleotide reductase nrd genes and operons by binding to NrdR-boxes. This is Transcriptional repressor NrdR from Polaromonas naphthalenivorans (strain CJ2).